Consider the following 317-residue polypeptide: Small ribosomal subunit protein uS2 (317 aa).

Positions 277–317 are disordered; it reads SDWTAPAANPANAAAAGAPAPAPAAATTTESWGGSGAENWG. The segment covering 281-302 has biased composition (low complexity); it reads APAANPANAAAAGAPAPAPAAA.

The protein belongs to the universal ribosomal protein uS2 family. Component of the small ribosomal subunit. Mature ribosomes consist of a small (40S) and a large (60S) subunit. The 40S subunit contains about 33 different proteins and 1 molecule of RNA (18S). The 60S subunit contains about 49 different proteins and 3 molecules of RNA (28S, 5.8S and 5S). Interacts with ribosomal protein S21.

Its subcellular location is the cytoplasm. Its function is as follows. Required for the assembly and/or stability of the 40S ribosomal subunit. Required for the processing of the 20S rRNA-precursor to mature 18S rRNA in a late step of the maturation of 40S ribosomal subunits. The chain is Small ribosomal subunit protein uS2 from Urechis caupo (Innkeeper worm).